Here is a 174-residue protein sequence, read N- to C-terminus: Large ribosomal subunit protein uL10 (174 aa).

The protein belongs to the universal ribosomal protein uL10 family. Part of the ribosomal stalk of the 50S ribosomal subunit. The N-terminus interacts with L11 and the large rRNA to form the base of the stalk. The C-terminus forms an elongated spine to which L12 dimers bind in a sequential fashion forming a multimeric L10(L12)X complex.

Forms part of the ribosomal stalk, playing a central role in the interaction of the ribosome with GTP-bound translation factors. The protein is Large ribosomal subunit protein uL10 of Methylibium petroleiphilum (strain ATCC BAA-1232 / LMG 22953 / PM1).